We begin with the raw amino-acid sequence, 400 residues long: Probable aspartate/prephenate aminotransferase (400 aa).

Residues Gly39, Trp125, and Asn175 each contribute to the L-aspartate site. An N6-(pyridoxal phosphate)lysine modification is found at Lys239. Residue Arg375 participates in L-aspartate binding.

Belongs to the class-I pyridoxal-phosphate-dependent aminotransferase family. As to quaternary structure, homodimer. Pyridoxal 5'-phosphate is required as a cofactor.

The protein resides in the cytoplasm. The catalysed reaction is L-aspartate + 2-oxoglutarate = oxaloacetate + L-glutamate. The enzyme catalyses L-arogenate + 2-oxoglutarate = prephenate + L-glutamate. Catalyzes the reversible conversion of aspartate and 2-oxoglutarate to glutamate and oxaloacetate. Can also transaminate prephenate in the presence of glutamate. This chain is Probable aspartate/prephenate aminotransferase (aspC), found in Rhizobium leguminosarum bv. phaseoli.